The primary structure comprises 117 residues: Iron-sulfur cluster insertion protein ErpA (117 aa).

The iron-sulfur cluster site is built by C45, C109, and C111.

It belongs to the HesB/IscA family. In terms of assembly, homodimer. Iron-sulfur cluster serves as cofactor.

Functionally, required for insertion of 4Fe-4S clusters for at least IspG. The protein is Iron-sulfur cluster insertion protein ErpA of Blochmanniella pennsylvanica (strain BPEN).